A 546-amino-acid polypeptide reads, in one-letter code: Tegument protein UL21 homolog (546 aa).

This sequence belongs to the alphaherpesvirinae HHV-1 UL21 protein family.

It is found in the virion tegument. It localises to the host cytoplasm. The protein localises to the host nucleus. Its function is as follows. May facilitate the viral transport through neural circuits. The polypeptide is Tegument protein UL21 homolog (MDV033) (Gallus gallus (Chicken)).